Consider the following 286-residue polypeptide: Pyridoxal kinase PdxY (286 aa).

Substrate is bound by residues Ser-9 and 44 to 45 (TQ). Residues Asp-111, Glu-148, and Lys-181 each coordinate ATP. Residue Asp-222 participates in substrate binding.

This sequence belongs to the pyridoxine kinase family. PdxY subfamily. In terms of assembly, homodimer. Requires Mg(2+) as cofactor.

It catalyses the reaction pyridoxal + ATP = pyridoxal 5'-phosphate + ADP + H(+). It functions in the pathway cofactor metabolism; pyridoxal 5'-phosphate salvage; pyridoxal 5'-phosphate from pyridoxal: step 1/1. Its function is as follows. Pyridoxal kinase involved in the salvage pathway of pyridoxal 5'-phosphate (PLP). Catalyzes the phosphorylation of pyridoxal to PLP. The protein is Pyridoxal kinase PdxY of Histophilus somni (strain 129Pt) (Haemophilus somnus).